The sequence spans 470 residues: Siroheme synthase 2 (470 aa).

The interval 1–202 (MDYLPMFAKL…EDWQGAEQWL (202 aa)) is precorrin-2 dehydrogenase /sirohydrochlorin ferrochelatase. NAD(+)-binding positions include 22–23 (EV) and 43–44 (PE). Phosphoserine is present on Ser-126. The tract at residues 214–470 (GEVVLVGAGP…TCDLKLVSLA (257 aa)) is uroporphyrinogen-III C-methyltransferase. Position 223 (Pro-223) interacts with S-adenosyl-L-methionine. The active-site Proton acceptor is the Asp-246. Lys-268 acts as the Proton donor in catalysis. S-adenosyl-L-methionine contacts are provided by residues 299–301 (GGD), 329–330 (TA), Met-381, and Gly-410.

The protein in the N-terminal section; belongs to the precorrin-2 dehydrogenase / sirohydrochlorin ferrochelatase family. In the C-terminal section; belongs to the precorrin methyltransferase family.

The catalysed reaction is uroporphyrinogen III + 2 S-adenosyl-L-methionine = precorrin-2 + 2 S-adenosyl-L-homocysteine + H(+). It carries out the reaction precorrin-2 + NAD(+) = sirohydrochlorin + NADH + 2 H(+). The enzyme catalyses siroheme + 2 H(+) = sirohydrochlorin + Fe(2+). Its pathway is cofactor biosynthesis; adenosylcobalamin biosynthesis; precorrin-2 from uroporphyrinogen III: step 1/1. The protein operates within cofactor biosynthesis; adenosylcobalamin biosynthesis; sirohydrochlorin from precorrin-2: step 1/1. It participates in porphyrin-containing compound metabolism; siroheme biosynthesis; precorrin-2 from uroporphyrinogen III: step 1/1. It functions in the pathway porphyrin-containing compound metabolism; siroheme biosynthesis; siroheme from sirohydrochlorin: step 1/1. Its pathway is porphyrin-containing compound metabolism; siroheme biosynthesis; sirohydrochlorin from precorrin-2: step 1/1. Its function is as follows. Multifunctional enzyme that catalyzes the SAM-dependent methylations of uroporphyrinogen III at position C-2 and C-7 to form precorrin-2 via precorrin-1. Then it catalyzes the NAD-dependent ring dehydrogenation of precorrin-2 to yield sirohydrochlorin. Finally, it catalyzes the ferrochelation of sirohydrochlorin to yield siroheme. This Aeromonas hydrophila subsp. hydrophila (strain ATCC 7966 / DSM 30187 / BCRC 13018 / CCUG 14551 / JCM 1027 / KCTC 2358 / NCIMB 9240 / NCTC 8049) protein is Siroheme synthase 2.